Reading from the N-terminus, the 955-residue chain is Reversion-inducing cysteine-rich protein with Kazal motifs (955 aa).

An N-terminal signal peptide occupies residues 1 to 22 (MSGCLQILTVLLCCRFWALVFS). A Knot 1 repeat occupies 28–75 (CVHHAADIPRCRDACEQLASIRSESRLRHLLHRLPSYCPETLSELWIC). The 5 X Knot repeats stretch occupies residues 28 to 326 (CVHHAADIPR…NPVEMDLITC (299 aa)). Asn77 carries an N-linked (GlcNAc...) asparagine glycan. Knot repeat units lie at residues 95-132 (CCEL…LYSC) and 142-188 (CCSY…LILC). The N-linked (GlcNAc...) asparagine glycan is linked to Asn191. 2 Knot repeats span residues 207–254 (CCDR…LWQC) and 282–326 (CCFK…LITC). 2 N-linked (GlcNAc...) asparagine glycosylation sites follow: Asn287 and Asn375. 3 Kazal-like domains span residues 615–661 (LFTG…SCRS), 686–741 (DLSE…HCQD), and 742–778 (ACRR…RCHA). Cystine bridges form between Cys621/Cys646, Cys623/Cys642, Cys631/Cys659, Cys704/Cys724, and Cys713/Cys739. Residue Ser931 is the site of GPI-anchor amidated serine attachment. The propeptide occupies 932-955 (SCVSISVCVLLLLCSLILTLTSDL).

This sequence belongs to the RECK family. As to quaternary structure, interacts (via knot repeats) with wnt7a (via disordered linker region); the interaction is direct. Interacts (via knot repeats) with wnt7b (via disordered linker region); the interaction is direct. Interacts with adgra2; the interaction is direct. Expressed in the cerebral endothelium.

Its subcellular location is the cell membrane. Its function is as follows. Functions together with adgra2 to enable brain endothelial cells to selectively respond to Wnt7 signals (wnt7a or wnt7b). Plays a key role in Wnt7-specific responses: required for central nervous system (CNS) angiogenesis and blood-brain barrier regulation. Acts as a Wnt7-specific coactivator of canonical Wnt signaling by decoding Wnt ligands: acts by interacting specifically with the disordered linker region of Wnt7, thereby conferring ligand selectivity for Wnt7. Adgra2 is then required to deliver reck-bound Wnt7 to frizzled by assembling a higher-order RECK-ADGRA2-Fzd-LRP5-LRP6 complex. Also acts as a serine protease inhibitor. In Danio rerio (Zebrafish), this protein is Reversion-inducing cysteine-rich protein with Kazal motifs.